The sequence spans 274 residues: MSYSRERLQRAQEAMGIAAKKSLGQNFLVSDTVINRIIDQVKAFAPEELVEVGPGPGALTDLLLELNLPLQLIELDSAIAAYWREKGLTVIEQDALRLDWKQFYTGKRVVFVSNLPYQISSSIVIERSLENEGVAAMVLMFQKEVAQKIRGTVDSDLYGLLSVYAQAFWKIETVTDAGPRDFQPPPKVASRVLSFERIESEVKNRKAFLTFVKCAFAQRRKLLKKNLSGLLSQKKLTEEQMVGWLAELGFKETARAEELSPKQFVALYKHFGFE.

6 residues coordinate S-adenosyl-L-methionine: Asn26, Leu28, Gly53, Glu74, Asp94, and Asn114.

Belongs to the class I-like SAM-binding methyltransferase superfamily. rRNA adenine N(6)-methyltransferase family. RsmA subfamily.

It localises to the cytoplasm. The catalysed reaction is adenosine(1518)/adenosine(1519) in 16S rRNA + 4 S-adenosyl-L-methionine = N(6)-dimethyladenosine(1518)/N(6)-dimethyladenosine(1519) in 16S rRNA + 4 S-adenosyl-L-homocysteine + 4 H(+). Specifically dimethylates two adjacent adenosines (A1518 and A1519) in the loop of a conserved hairpin near the 3'-end of 16S rRNA in the 30S particle. May play a critical role in biogenesis of 30S subunits. In Bdellovibrio bacteriovorus (strain ATCC 15356 / DSM 50701 / NCIMB 9529 / HD100), this protein is Ribosomal RNA small subunit methyltransferase A.